The chain runs to 157 residues: uncharacterized protein (157 aa).

Residues 1–28 form the signal peptide; that stretch reads MKRLFMKASLVLFAVVFVFAVKGAPAKA.

This is an uncharacterized protein from Bacillus subtilis (strain 168).